Here is a 375-residue protein sequence, read N- to C-terminus: Protein arginine N-methyltransferase 6 (375 aa).

The disordered stretch occupies residues 1-36 (MSQPKRRKLESGGGGEGGEGTEEEDGGELEVAVPRP). The span at 19–28 (EGTEEEDGGE) shows a compositional bias: acidic residues. A Phosphothreonine modification is found at Thr21. Asymmetric dimethylarginine; by autocatalysis is present on Arg38. The SAM-dependent MTase PRMT-type domain maps to 44–374 (DQLYYQCYSD…EEKTKDFAME (331 aa)). Residues His57, Arg66, Gly90, Glu112, and Glu141 each coordinate S-adenosyl-L-methionine. Catalysis depends on residues Glu155 and Glu164.

This sequence belongs to the class I-like SAM-binding methyltransferase superfamily. Protein arginine N-methyltransferase family. PRMT6 subfamily. In terms of assembly, interacts with (and methylates) HIV-1 Tat, Rev and Nucleocapsid protein p7 (NC). Interacts with EPB41L3 and NCOA1. Automethylation enhances its stability.

The protein resides in the nucleus. The catalysed reaction is L-arginyl-[protein] + 2 S-adenosyl-L-methionine = N(omega),N(omega)-dimethyl-L-arginyl-[protein] + 2 S-adenosyl-L-homocysteine + 2 H(+). In terms of biological role, arginine methyltransferase that can catalyze the formation of both omega-N monomethylarginine (MMA) and asymmetrical dimethylarginine (aDMA), with a strong preference for the formation of aDMA. Preferentially methylates arginyl residues present in a glycine and arginine-rich domain and displays preference for monomethylated substrates. Specifically mediates the asymmetric dimethylation of histone H3 'Arg-2' to form H3R2me2a. H3R2me2a represents a specific tag for epigenetic transcriptional repression and is mutually exclusive with methylation on histone H3 'Lys-4' (H3K4me2 and H3K4me3). Acts as a transcriptional repressor of various genes such as HOXA2, THBS1 and TP53. Repression of TP53 blocks cellular senescence. Also methylates histone H2A and H4 'Arg-3' (H2AR3me and H4R3me, respectively). Acts as a regulator of DNA base excision during DNA repair by mediating the methylation of DNA polymerase beta (POLB), leading to the stimulation of its polymerase activity by enhancing DNA binding and processivity. Methylates HMGA1. Regulates alternative splicing events. Acts as a transcriptional coactivator of a number of steroid hormone receptors including ESR1, ESR2, PGR and NR3C1. Promotes fasting-induced transcriptional activation of the gluconeogenic program through methylation of the CRTC2 transcription coactivator. Methylates GPS2, protecting GPS2 from ubiquitination and degradation. Methylates SIRT7, inhibiting SIRT7 histone deacetylase activity and promoting mitochondria biogenesis. This is Protein arginine N-methyltransferase 6 (PRMT6) from Bos taurus (Bovine).